Here is a 281-residue protein sequence, read N- to C-terminus: Pantothenate synthetase (281 aa).

30-37 serves as a coordination point for ATP; it reads MGNLHLGH. Catalysis depends on His37, which acts as the Proton donor. (R)-pantoate is bound at residue Gln61. Residue Gln61 coordinates beta-alanine. 149–152 serves as a coordination point for ATP; sequence GRKD. Position 155 (Gln155) interacts with (R)-pantoate. Residues Ile178 and 186–189 contribute to the ATP site; that span reads MSSR.

Belongs to the pantothenate synthetase family. Homodimer.

Its subcellular location is the cytoplasm. It carries out the reaction (R)-pantoate + beta-alanine + ATP = (R)-pantothenate + AMP + diphosphate + H(+). Its pathway is cofactor biosynthesis; (R)-pantothenate biosynthesis; (R)-pantothenate from (R)-pantoate and beta-alanine: step 1/1. Functionally, catalyzes the condensation of pantoate with beta-alanine in an ATP-dependent reaction via a pantoyl-adenylate intermediate. The polypeptide is Pantothenate synthetase (Shewanella sediminis (strain HAW-EB3)).